The following is a 488-amino-acid chain: Putative serine carboxypeptidase-like 30 (488 aa).

Residues 1-28 form the signal peptide; the sequence is MDNHTKSFSSLLISLWFTALLILVEMVS. Disulfide bonds link Cys99/Cys368, Cys262/Cys275, and Cys299/Cys336. The N-linked (GlcNAc...) asparagine glycan is linked to Asn150. Ser192 is a catalytic residue. N-linked (GlcNAc...) asparagine glycosylation occurs at Asn263. Residues Asn364 and Asn375 are each glycosylated (N-linked (GlcNAc...) asparagine). Catalysis depends on residues Asp405 and His457.

Belongs to the peptidase S10 family. As to expression, expression not detected.

It is found in the secreted. Functionally, probable carboxypeptidase. The protein is Putative serine carboxypeptidase-like 30 (SCPL30) of Arabidopsis thaliana (Mouse-ear cress).